We begin with the raw amino-acid sequence, 165 residues long: Xanthine-guanine phosphoribosyltransferase (165 aa).

Residues 41-42 (RG) and 98-106 (DDLTDTGKT) each bind 5-phospho-alpha-D-ribose 1-diphosphate. Mg(2+) is bound at residue Asp99. Positions 102 and 145 each coordinate guanine. Xanthine contacts are provided by Asp102 and Ile145. GMP contacts are provided by residues 102–106 (DTGKT) and 144–145 (WI).

The protein belongs to the purine/pyrimidine phosphoribosyltransferase family. XGPT subfamily. In terms of assembly, homotetramer. Requires Mg(2+) as cofactor.

The protein resides in the cell inner membrane. It carries out the reaction GMP + diphosphate = guanine + 5-phospho-alpha-D-ribose 1-diphosphate. The catalysed reaction is XMP + diphosphate = xanthine + 5-phospho-alpha-D-ribose 1-diphosphate. The enzyme catalyses IMP + diphosphate = hypoxanthine + 5-phospho-alpha-D-ribose 1-diphosphate. Its pathway is purine metabolism; GMP biosynthesis via salvage pathway; GMP from guanine: step 1/1. It participates in purine metabolism; XMP biosynthesis via salvage pathway; XMP from xanthine: step 1/1. Purine salvage pathway enzyme that catalyzes the transfer of the ribosyl-5-phosphate group from 5-phospho-alpha-D-ribose 1-diphosphate (PRPP) to the N9 position of the 6-oxopurines guanine and xanthine to form the corresponding ribonucleotides GMP (guanosine 5'-monophosphate) and XMP (xanthosine 5'-monophosphate), with the release of PPi. To a lesser extent, also acts on hypoxanthine. The sequence is that of Xanthine-guanine phosphoribosyltransferase from Brucella canis (strain ATCC 23365 / NCTC 10854 / RM-666).